Reading from the N-terminus, the 746-residue chain is Exostosin-1 (746 aa).

At 1–5 (MQAKK) the chain is on the cytoplasmic side. Residues 6-26 (RYFILLSAGSCLALLFYFGGV) traverse the membrane as a helical; Signal-anchor for type II membrane protein segment. Residues 27–746 (QFRASRSHSR…RKKYRDIERL (720 aa)) are Lumenal-facing. N89 carries N-linked (GlcNAc...) asparagine glycosylation. 2 cysteine pairs are disulfide-bonded: C98–C103 and C109–C152. A protein contacts are provided by L166 and Y203. 4 residues coordinate UDP: K267, K269, Y271, and R280. An intrachain disulfide couples C298 to C312. H300 provides a ligand contact to a protein. Residues Y319 and Y324 each coordinate UDP. N330 is a glycosylation site (N-linked (GlcNAc...) asparagine). Disulfide bonds link C334–C355 and C652–C704. UDP-binding residues include R346 and E349.

It belongs to the glycosyltransferase 47 family. Part of the heparan sulfate polymerase, a dimeric complex composed of EXT1 and EXT2. Could also form homooligomeric complexes. Interacts with NDST1. Post-translationally, N-glycosylated.

It is found in the golgi apparatus membrane. The protein localises to the golgi apparatus. It localises to the cis-Golgi network membrane. Its subcellular location is the endoplasmic reticulum membrane. The catalysed reaction is 3-O-{alpha-D-GlcNAc-[(1-&gt;4)-beta-D-GlcA-(1-&gt;4)-alpha-D-GlcNAc](n)-(1-&gt;4)-beta-D-GlcA-(1-&gt;3)-beta-D-Gal-(1-&gt;3)-beta-D-Gal-(1-&gt;4)-beta-D-Xyl}-L-seryl-[protein] + UDP-alpha-D-glucuronate = 3-O-{[(1-&gt;4)-beta-D-GlcA-(1-&gt;4)-alpha-D-GlcNAc](n+1)-(1-&gt;4)-beta-D-GlcA-(1-&gt;3)-beta-D-Gal-(1-&gt;3)-beta-D-Gal-(1-&gt;4)-beta-D-Xyl}-L-seryl-[protein] + UDP + H(+). It participates in protein modification; protein glycosylation. In terms of biological role, glycosyltransferase forming with EXT2 the heterodimeric heparan sulfate polymerase which catalyzes the elongation of the heparan sulfate glycan backbone. Glycan backbone extension consists in the alternating transfer of (1-&gt;4)-beta-D-GlcA and (1-&gt;4)-alpha-D-GlcNAc residues from their respective UDP-sugar donors. Both EXT1 and EXT2 are required for the full activity of the polymerase since EXT1 bears the N-acetylglucosaminyl-proteoglycan 4-beta-glucuronosyltransferase activity within the complex while EXT2 carries the glucuronosyl-N-acetylglucosaminyl-proteoglycan 4-alpha-N-acetylglucosaminyltransferase activity. Heparan sulfate proteoglycans are ubiquitous components of the extracellular matrix and play an important role in tissue homeostasis and signaling. This Cricetulus griseus (Chinese hamster) protein is Exostosin-1.